A 77-amino-acid polypeptide reads, in one-letter code: MEVKVYRVKGIFQRGKLKQPFTKEYRALKPEHVEELVYSEIGSKHRVPRTKIWIESIEEIKPEEAENPVVRRLSLEL.

It belongs to the eukaryotic ribosomal protein eL20 family. In terms of assembly, part of the 50S ribosomal subunit. Binds 23S rRNA.

The chain is Large ribosomal subunit protein eL20 from Thermococcus gammatolerans (strain DSM 15229 / JCM 11827 / EJ3).